The following is a 188-amino-acid chain: ATP synthase subunit b (188 aa).

A helical membrane pass occupies residues 19 to 39; it reads VYVLGATIVSFLILFLFITYF.

The protein belongs to the ATPase B chain family. In terms of assembly, F-type ATPases have 2 components, F(1) - the catalytic core - and F(0) - the membrane proton channel. F(1) has five subunits: alpha(3), beta(3), gamma(1), delta(1), epsilon(1). F(0) has three main subunits: a(1), b(2) and c(10-14). The alpha and beta chains form an alternating ring which encloses part of the gamma chain. F(1) is attached to F(0) by a central stalk formed by the gamma and epsilon chains, while a peripheral stalk is formed by the delta and b chains.

The protein resides in the cell membrane. F(1)F(0) ATP synthase produces ATP from ADP in the presence of a proton or sodium gradient. F-type ATPases consist of two structural domains, F(1) containing the extramembraneous catalytic core and F(0) containing the membrane proton channel, linked together by a central stalk and a peripheral stalk. During catalysis, ATP synthesis in the catalytic domain of F(1) is coupled via a rotary mechanism of the central stalk subunits to proton translocation. Its function is as follows. Component of the F(0) channel, it forms part of the peripheral stalk, linking F(1) to F(0). The protein is ATP synthase subunit b of Mesomycoplasma hyopneumoniae (strain J / ATCC 25934 / NCTC 10110) (Mycoplasma hyopneumoniae).